The primary structure comprises 396 residues: Putative 3-phosphoinositide-dependent protein kinase 2 (396 aa).

Polar residues predominate over residues 1 to 11; sequence MVRTQTESSTP. Residues 1 to 53 form a disordered region; sequence MVRTQTESSTPPGIPGGSRQGPAMDGTAAEPRPGAGSLQHAQPPPQPRKKRPE. In terms of domain architecture, Protein kinase spans 55 to 315; the sequence is FKFGKILGEG…YGPLKAHPFF (261 aa). Residues 65–67 and Lys-84 each bind ATP; that span reads SFS. Residues 86-130 are PIF-pocket; the sequence is LEKRHIIKENKVPYVTRERDVMSRLDHPFFVKLYFTFQDDEKLYF. Residues 133–135 and Glu-139 each bind ATP; that span reads SYA. Asp-178 (proton acceptor) is an active-site residue. Glu-182 and Asp-196 together coordinate ATP.

This sequence belongs to the protein kinase superfamily. AGC Ser/Thr protein kinase family. PDPK1 subfamily. Phosphorylated on tyrosine and serine/threonine.

It is found in the cytoplasm. It localises to the membrane. It carries out the reaction L-seryl-[protein] + ATP = O-phospho-L-seryl-[protein] + ADP + H(+). The enzyme catalyses L-threonyl-[protein] + ATP = O-phospho-L-threonyl-[protein] + ADP + H(+). Phosphorylates and activates not only PKB/AKT, but also PKA, PKC-zeta, RPS6KA1 and RPS6KB1. May play a general role in signaling processes and in development. The polypeptide is Putative 3-phosphoinositide-dependent protein kinase 2 (Homo sapiens (Human)).